The sequence spans 1022 residues: rDNA transcriptional regulator POL5 (1022 aa).

3 stretches are compositionally biased toward acidic residues: residues E706–E719, S728–A748, and D781–D802. 2 disordered regions span residues E706–A748 and G778–K805. S789 is modified (phosphoserine).

Belongs to the MYBBP1A family. Interacts with FRK1.

It localises to the nucleus. Its subcellular location is the nucleolus. It catalyses the reaction DNA(n) + a 2'-deoxyribonucleoside 5'-triphosphate = DNA(n+1) + diphosphate. Its activity is regulated as follows. Stimulated by PCNA and inhibited by aphidicolin. Plays an important role in the regulation of rRNA transcription. Binds near or at the enhancer region of rRNA repeating units. May have DNA polymerase activity, but it is not required for in vivo function. The chain is rDNA transcriptional regulator POL5 from Saccharomyces cerevisiae (strain ATCC 204508 / S288c) (Baker's yeast).